Reading from the N-terminus, the 871-residue chain is DNA mismatch repair protein MutS (871 aa).

621 to 628 is an ATP binding site; the sequence is GPNMAGKS.

The protein belongs to the DNA mismatch repair MutS family.

In terms of biological role, this protein is involved in the repair of mismatches in DNA. It is possible that it carries out the mismatch recognition step. This protein has a weak ATPase activity. This chain is DNA mismatch repair protein MutS, found in Geobacter sulfurreducens (strain ATCC 51573 / DSM 12127 / PCA).